We begin with the raw amino-acid sequence, 120 residues long: Chaperonin GroEL (120 aa).

ATP is bound at residue 23–27 (DGTTT).

Belongs to the chaperonin (HSP60) family. In terms of assembly, forms a cylinder of 14 subunits composed of two heptameric rings stacked back-to-back. Interacts with the co-chaperonin GroES.

It is found in the cytoplasm. It carries out the reaction ATP + H2O + a folded polypeptide = ADP + phosphate + an unfolded polypeptide.. Functionally, together with its co-chaperonin GroES, plays an essential role in assisting protein folding. The GroEL-GroES system forms a nano-cage that allows encapsulation of the non-native substrate proteins and provides a physical environment optimized to promote and accelerate protein folding. This chain is Chaperonin GroEL, found in Mycolicibacterium rhodesiae (Mycobacterium rhodesiae).